We begin with the raw amino-acid sequence, 1762 residues long: Lysine-specific demethylase 3B (1762 aa).

A2 is modified (N-acetylalanine). Disordered regions lie at residues 253 to 350 (MDSS…FVPQ) and 426 to 468 (TTAS…NSSL). A compositionally biased stretch (basic and acidic residues) spans 299 to 310 (ATKKLKGDRGEV). The span at 426 to 435 (TTASSTPTTV) shows a compositional bias: low complexity. Over residues 453–465 (GSWSQASGENSRN) the composition is skewed to polar residues. Phosphoserine is present on residues S493, S547, S557, and S561. A disordered region spans residues 574-613 (SVLGADTQPGPKAGSSVDRKVPAESMPTLTPAFPRSLLNT). The residue at position 615 (T615) is a Phosphothreonine. Residues 713 to 746 (TGSPSLSAVGNGRSSSPTNSLTQPIEMPTLSSSP) show a composition bias toward polar residues. The interval 713-763 (TGSPSLSAVGNGRSSSPTNSLTQPIEMPTLSSSPTEERPTVGPGQQDNPLL) is disordered. A phosphoserine mark is found at S767, S774, and S779. Residue K789 forms a Glycyl lysine isopeptide (Lys-Gly) (interchain with G-Cter in SUMO2) linkage. S799 carries the phosphoserine modification. Residues 806 to 853 (ACRQDSDSSTNSDLSDLSDSEEQLQAKSGLKGIPEHLMGKLGPNGERS) are disordered. The C6-type zinc finger occupies 1032 to 1057 (CDVCETTLFNIHWVCRKCGFGVCLDC). Positions 1146–1163 (QLPSVTPSASSGNETTFS) are enriched in polar residues. Residues 1146 to 1217 (QLPSVTPSAS…AIRPPCPDTA (72 aa)) are disordered. Phosphoserine is present on residues S1254 and S1260. Residues 1285-1306 (SNSKTEGSSLRDLLHSGPGKLP) form a disordered region. An LXXLL motif motif is present at residues 1294-1298 (LRDLL). A JmjC domain is found at 1499–1722 (MPTRFEDLME…HCFRLTQEFR (224 aa)). H1561, D1563, and H1690 together coordinate Fe cation.

The protein belongs to the JHDM2 histone demethylase family. It depends on Fe(2+) as a cofactor.

Its subcellular location is the nucleus. It catalyses the reaction N(6),N(6)-dimethyl-L-lysyl(9)-[histone H3] + 2 2-oxoglutarate + 2 O2 = L-lysyl(9)-[histone H3] + 2 formaldehyde + 2 succinate + 2 CO2. Functionally, histone demethylase that specifically demethylates 'Lys-9' of histone H3, thereby playing a central role in histone code. Demethylation of Lys residue generates formaldehyde and succinate May have tumor suppressor activity. This Mus musculus (Mouse) protein is Lysine-specific demethylase 3B (Kdm3b).